The primary structure comprises 274 residues: Proteasome subunit beta (274 aa).

Residues 1 to 52 (MADPMGGAGRLPAVFMTPGTSSFTDFLSQSAPHLLPGARGGLPGPVTEVAHG) constitute a propeptide, removed in mature form; by autocatalysis. Threonine 53 functions as the Nucleophile in the catalytic mechanism.

Belongs to the peptidase T1B family. The 20S proteasome core is composed of 14 alpha and 14 beta subunits that assemble into four stacked heptameric rings, resulting in a barrel-shaped structure. The two inner rings, each composed of seven catalytic beta subunits, are sandwiched by two outer rings, each composed of seven alpha subunits. The catalytic chamber with the active sites is on the inside of the barrel. Has a gated structure, the ends of the cylinder being occluded by the N-termini of the alpha-subunits. Is capped by the proteasome-associated ATPase, ARC.

Its subcellular location is the cytoplasm. It carries out the reaction Cleavage of peptide bonds with very broad specificity.. It participates in protein degradation; proteasomal Pup-dependent pathway. With respect to regulation, the formation of the proteasomal ATPase ARC-20S proteasome complex, likely via the docking of the C-termini of ARC into the intersubunit pockets in the alpha-rings, may trigger opening of the gate for substrate entry. Interconversion between the open-gate and close-gate conformations leads to a dynamic regulation of the 20S proteasome proteolysis activity. Component of the proteasome core, a large protease complex with broad specificity involved in protein degradation. In Frankia alni (strain DSM 45986 / CECT 9034 / ACN14a), this protein is Proteasome subunit beta.